A 415-amino-acid chain; its full sequence is Runt-related transcription factor 3 (415 aa).

Disordered stretches follow at residues 1–48, 176–266, and 375–415; these read MRIP…GGRA, GPRE…FPDP, and NLMN…WRPY. In terms of domain architecture, Runt spans 54-182; it reads SMVDVLADHA…TVDGPREPRR (129 aa). Residues 186 to 205 are compositionally biased toward basic and acidic residues; that stretch reads KLEDQTKPFPDRFGDLERLR. K192 participates in a covalent cross-link: Glycyl lysine isopeptide (Lys-Gly) (interchain with G-Cter in SUMO2). Positions 209–240 are enriched in polar residues; sequence TPSTPSPRGSLSTTSHFSSQPQTPIQGTSELN. S243 carries the post-translational modification Phosphoserine. A compositionally biased stretch (polar residues) spans 393 to 402; the sequence is SHSNSPTALS. Basic and acidic residues predominate over residues 406–415; it reads RMDEAVWRPY.

In terms of assembly, heterodimer with CBFB. RUNX3 binds DNA as a monomer and through the Runt domain. DNA-binding is increased by heterodimerization. Interacts with TLE1 and SUV39H1. The tyrosine phosphorylated form (via runt domain) interacts with SRC (via protein kinase domain). Interacts with FYN and LCK. Interacts with FOXP3. Interacts with ZFHX3. Interacts with TBX21. In terms of processing, phosphorylated on tyrosine residues by SRC. Phosphorylated by LCK and FYN. Expressed in gastric cancer tissues (at protein level).

Its subcellular location is the nucleus. It localises to the cytoplasm. Forms the heterodimeric complex core-binding factor (CBF) with CBFB. RUNX members modulate the transcription of their target genes through recognizing the core consensus binding sequence 5'-TGTGGT-3', or very rarely, 5'-TGCGGT-3', within their regulatory regions via their runt domain, while CBFB is a non-DNA-binding regulatory subunit that allosterically enhances the sequence-specific DNA-binding capacity of RUNX. The heterodimers bind to the core site of a number of enhancers and promoters, including murine leukemia virus, polyomavirus enhancer, T-cell receptor enhancers, LCK, IL3 and GM-CSF promoters. May be involved in the control of cellular proliferation and/or differentiation. In association with ZFHX3, up-regulates CDKN1A promoter activity following TGF-beta stimulation. CBF complexes repress ZBTB7B transcription factor during cytotoxic (CD8+) T cell development. They bind to RUNX-binding sequence within the ZBTB7B locus acting as transcriptional silencer and allowing for cytotoxic T cell differentiation. CBF complexes binding to the transcriptional silencer is essential for recruitment of nuclear protein complexes that catalyze epigenetic modifications to establish epigenetic ZBTB7B silencing. Necessary for the development and survival of sensory neurons expressing parvalbumin. The protein is Runt-related transcription factor 3 (RUNX3) of Homo sapiens (Human).